A 305-amino-acid polypeptide reads, in one-letter code: Aspartate carbamoyltransferase catalytic subunit (305 aa).

Carbamoyl phosphate-binding residues include R56 and T57. K85 is a binding site for L-aspartate. Residues R106, H134, and Q137 each contribute to the carbamoyl phosphate site. 2 residues coordinate L-aspartate: R167 and R227. Carbamoyl phosphate contacts are provided by L266 and P267.

This sequence belongs to the aspartate/ornithine carbamoyltransferase superfamily. ATCase family. In terms of assembly, heterooligomer of catalytic and regulatory chains.

The catalysed reaction is carbamoyl phosphate + L-aspartate = N-carbamoyl-L-aspartate + phosphate + H(+). Its pathway is pyrimidine metabolism; UMP biosynthesis via de novo pathway; (S)-dihydroorotate from bicarbonate: step 2/3. Catalyzes the condensation of carbamoyl phosphate and aspartate to form carbamoyl aspartate and inorganic phosphate, the committed step in the de novo pyrimidine nucleotide biosynthesis pathway. The sequence is that of Aspartate carbamoyltransferase catalytic subunit from Thermoplasma volcanium (strain ATCC 51530 / DSM 4299 / JCM 9571 / NBRC 15438 / GSS1).